The sequence spans 146 residues: Hemoglobin subunit beta (146 aa).

At Val-1 the chain carries N-acetylvaline. The Globin domain maps to 2–146; it reads HLTGEEKSLV…VANALAHKYH (145 aa). Phosphothreonine is present on Thr-12. Ser-44 is modified (phosphoserine). An N6-acetyllysine modification is found at Lys-59. His-63 is a heme b binding site. Lys-82 is modified (N6-acetyllysine). His-92 contacts heme b. S-nitrosocysteine is present on Cys-93. N6-acetyllysine is present on Lys-144.

It belongs to the globin family. Heterotetramer of two alpha chains and two beta chains. Red blood cells.

Involved in oxygen transport from the lung to the various peripheral tissues. The protein is Hemoglobin subunit beta (HBB) of Ursus maritimus (Polar bear).